We begin with the raw amino-acid sequence, 396 residues long: Immunoglobulin heavy constant gamma 4 (396 aa).

The interval 1–98 is CH1; it reads ASTKGPSVFP…PSNTKVDKRV (98 aa). Over 1–347 the chain is Extracellular; sequence ASTKGPSVFP…DGELDGLWTT (347 aa). 3 consecutive Ig-like domains span residues 6-99, 118-217, and 226-322; these read PSVF…KRVE, PSVF…KTIS, and PQVY…KSLS. Cysteine 27 and cysteine 83 form a disulfide bridge. The interval 99–110 is hinge; it reads ESKYGPPCPSCP. The interval 111–220 is CH2; it reads APEFLGGPSV…SIEKTISKAK (110 aa). 2 disulfide bridges follow: cysteine 141/cysteine 201 and cysteine 247/cysteine 305. Asparagine 177 carries an N-linked (GlcNAc...) (complex) asparagine glycan. Residues 221–327 form a CH3 region; it reads GQPREPQVYT…QKSLSLSLEL (107 aa). A helical transmembrane segment spans residues 348 to 368; the sequence is ITIFITLFLLSVCYSATVTFF. Residues 369-396 are Cytoplasmic-facing; sequence KVKWIFSSVVDLKQTIVPDYRNMIRQGA.

As to quaternary structure, immunoglobulins are composed of two identical heavy chains and two identical light chains; disulfide-linked. Post-translationally, glycosylation on Asn-177 is required for interaction with Fc receptors and ability to activate the complement pathway. (Microbial infection) Deglycosylation on Asn-177 by S.pyogenes EndoS or Endos2 endoglucosidases prevents interaction between immunoglobulin-gamma (IgG) and Fc receptors, impairing ability to activate the complement pathway.

It is found in the secreted. The protein resides in the cell membrane. Its function is as follows. Constant region of immunoglobulin heavy chains. Immunoglobulins, also known as antibodies, are membrane-bound or secreted glycoproteins produced by B lymphocytes. In the recognition phase of humoral immunity, the membrane-bound immunoglobulins serve as receptors which, upon binding of a specific antigen, trigger the clonal expansion and differentiation of B lymphocytes into immunoglobulins-secreting plasma cells. Secreted immunoglobulins mediate the effector phase of humoral immunity, which results in the elimination of bound antigens. The antigen binding site is formed by the variable domain of one heavy chain, together with that of its associated light chain. Thus, each immunoglobulin has two antigen binding sites with remarkable affinity for a particular antigen. The variable domains are assembled by a process called V-(D)-J rearrangement and can then be subjected to somatic hypermutations which, after exposure to antigen and selection, allow affinity maturation for a particular antigen. The chain is Immunoglobulin heavy constant gamma 4 from Homo sapiens (Human).